Consider the following 1006-residue polypeptide: MKLLSVCAIALLAAQAAGASIKHMLNGFTLMEHSDPAKRELLQKYVTWDEKSLFVNGERIMIFSGEVHPFRLPVPSLWLDVFQKIKALGFNCVSFYVDWALLEGKPGEYRAEGNFALEPFFDVAKQAGIYLLARPGPYINAEASGGGFPGWLQRVNGTLRTSDPAYLKATDNYIAHVAATIAKGQITNGGPVILYQPENEYSGACCDATFPDGDYMQYVIDQARNAGIVVPLINNDAWTGGHNAPGTGKGEVDIYGHDSYPLGFDCGHPSVWPKGNLPTTFRTDHLKQSPTTPYSLIEFQAGSFDPWGGPGFAACAALVNHEFERVFYKNDLSFGAAILNLYMTFGGTNWGNLGHPGGYTSYDYGSPLTESRNVTREKYSELKLIGNFVKASPSYLLATPGNLTTSGYADTADLTVTPLLGNGTGSYFVVRHTDYTSQASTPYKLSLPTSAGRLTVPQLGGTLTLNGRDSKIHVVDYNVAGTNIIYSTAEVFTWKNFGDSKVLILYGGPGEHHELAVSLKSDVQVVEGSNSEFKSKKVGDVVVVAWDVSPSRRIVQIGDLKIFLLDRNSVYNYWVPQLDKDDSSTGYSSEKTTASSIIVKAGYLVRTAYTKGSGLYLTADFNATTPVEVIGAPSNVRNLYINGEKTQFKTDKNGIWSTEVKYSAPKIKLPSMKDLDWKYLDTLQEVQSTYDDSAWPAADLDTTPNTLRPLTTPKSLYSSDYGFHTGYLIYRGHFVADGSETTFDVRTQGGSAFGSSVWLNESFLGSWTGLNANADYNSTYKLPQVEQGKNYVLTILIDTMGLNENWVVGTDEMKNPRGILSYKLSGRDASAITWKLTGNLGGEDYQDKIRGPLNEGGLYAERQGFHQPQPPSQKWKSASPLDGLSKPGIGFYTAQFDLDIPSGWDVPLYFNFGNSTKSAYRVQLYVNGYQYGKFVSNIGPQTSFPVPQGILNYQGTNWVALTLWALESDGAKLDDFELVNTTPVMTALSKIRPSKQPNYRQRKGAY.

An N-terminal signal peptide occupies residues 1–18; that stretch reads MKLLSVCAIALLAAQAAG. The substrate site is built by Tyr-96, Asn-140, Ala-141, and Glu-142. A glycan (N-linked (GlcNAc...) asparagine) is linked at Asn-156. Asn-199 contacts substrate. The active-site Proton donor is the Glu-200. Cys-205 and Cys-206 are disulfide-bonded. Tyr-260 contacts substrate. Cys-266 and Cys-315 form a disulfide bridge. Catalysis depends on Glu-298, which acts as the Nucleophile. Residue Tyr-364 coordinates substrate. Asn-373, Asn-402, Asn-422, Asn-622, Asn-760, Asn-777, and Asn-914 each carry an N-linked (GlcNAc...) asparagine glycan.

It belongs to the glycosyl hydrolase 35 family.

The protein resides in the secreted. It catalyses the reaction Hydrolysis of terminal non-reducing beta-D-galactose residues in beta-D-galactosides.. In terms of biological role, cleaves beta-linked terminal galactosyl residues from gangliosides, glycoproteins, and glycosaminoglycans. In Aspergillus fumigatus (strain ATCC MYA-4609 / CBS 101355 / FGSC A1100 / Af293) (Neosartorya fumigata), this protein is Probable beta-galactosidase A (lacA).